A 709-amino-acid chain; its full sequence is Elongation factor G (709 aa).

The tr-type G domain occupies 9 to 292; that stretch reads AYYRNIGISA…AVVEYLPSPT (284 aa). GTP-binding positions include 18–25, 89–93, and 143–146; these read AHIDAGKT, DTPGH, and NKMD.

This sequence belongs to the TRAFAC class translation factor GTPase superfamily. Classic translation factor GTPase family. EF-G/EF-2 subfamily.

It localises to the cytoplasm. In terms of biological role, catalyzes the GTP-dependent ribosomal translocation step during translation elongation. During this step, the ribosome changes from the pre-translocational (PRE) to the post-translocational (POST) state as the newly formed A-site-bound peptidyl-tRNA and P-site-bound deacylated tRNA move to the P and E sites, respectively. Catalyzes the coordinated movement of the two tRNA molecules, the mRNA and conformational changes in the ribosome. This chain is Elongation factor G, found in Blochmanniella floridana.